We begin with the raw amino-acid sequence, 84 residues long: uncharacterized protein (84 aa).

In terms of domain architecture, HTH cro/C1-type spans 7 to 62; that stretch reads IDVMLAKRKMSVTELSERVGITMANLSILKNGKAKAIRLSTLEAICKALECQPGDI. The segment at residues 18–37 is a DNA-binding region (H-T-H motif); sequence VTELSERVGITMANLSILKN.

This is an uncharacterized protein from Bacillus subtilis (strain 168).